The primary structure comprises 508 residues: MHMSKSFLLISMGLASISVHAQTLTRDNGAPVGDNQNSITAGENGSVLLQDVHLIQKLQRFARERIPERVVHARGTGAHGEFVASGDFSDLTLSSPFAQSGKVTPVFVRFSTVIHSKGSPETLRDPRGFATKFYTDQGNWDLVGNNLPVFFIRDSIKFPDMVHSLKPSPVTNLQDPNRFFDFFSSQPSATNMLTWVYTNLGTPASYRTMDGFGVHAYKWINQKGEVNYVKFHWKSQQGVKSLRPAEVTKVQGEDFNHLTNDLYTQINAGNFPKWDLYVKVLSPKALSKLDYNGLDATKVWLDVPEKKVGTMTLNRVPDNFFLETEQSAFAPSNIIPGIEPSEDRLLQGRLFAYADTQLYRLGANLFQLPVNSPKSPVANHNQDGPSNNSTGLGNVDSLDVNYEPSRLVNLTVDKQARAVETPLSGHVQQQAIRNPRDFFQAGVLYRSLSEQDKADLIHNLSGDLNKVNDAEVKAIMVSYFYRADKEYGTRLAKATDVNLKQVTKLASM.

Residues 1–21 (MHMSKSFLLISMGLASISVHA) form the signal peptide. Active-site residues include histidine 72 and asparagine 145. Position 353 (tyrosine 353) interacts with heme. Residues 373–392 (PKSPVANHNQDGPSNNSTGL) show a composition bias toward polar residues. The interval 373 to 396 (PKSPVANHNQDGPSNNSTGLGNVD) is disordered.

It belongs to the catalase family. The cofactor is heme.

The protein resides in the periplasm. It carries out the reaction 2 H2O2 = O2 + 2 H2O. Functionally, decomposes hydrogen peroxide into water and oxygen; serves to protect cells from the toxic effects of hydrogen peroxide. In Vibrio vulnificus (strain YJ016), this protein is Catalase.